A 105-amino-acid chain; its full sequence is UPF0145 protein VP1283 (105 aa).

It belongs to the UPF0145 family.

The chain is UPF0145 protein VP1283 from Vibrio parahaemolyticus serotype O3:K6 (strain RIMD 2210633).